A 375-amino-acid chain; its full sequence is Tyrosine--tRNA ligase (375 aa).

The L-tyrosine site is built by Tyr-37, Tyr-168, Gln-172, Asp-175, and Gln-190. Residues 251–255 carry the 'KMSKS' region motif; the sequence is KMSKS. Lys-254 provides a ligand contact to ATP.

This sequence belongs to the class-I aminoacyl-tRNA synthetase family. TyrS type 4 subfamily. As to quaternary structure, homodimer.

The protein localises to the cytoplasm. The catalysed reaction is tRNA(Tyr) + L-tyrosine + ATP = L-tyrosyl-tRNA(Tyr) + AMP + diphosphate + H(+). In terms of biological role, catalyzes the attachment of tyrosine to tRNA(Tyr) in a two-step reaction: tyrosine is first activated by ATP to form Tyr-AMP and then transferred to the acceptor end of tRNA(Tyr). This is Tyrosine--tRNA ligase from Thermococcus gammatolerans (strain DSM 15229 / JCM 11827 / EJ3).